The primary structure comprises 273 residues: Undecaprenyl-diphosphatase (273 aa).

7 helical membrane passes run 13 to 35, 45 to 62, 82 to 102, 108 to 128, 186 to 206, 219 to 239, and 250 to 270; these read GLVE…VFGN, VFEI…VFEY, FVLN…LFDK, LFNP…ILWV, TEFS…YDVL, LILI…KALL, and FAYY…SGWI.

This sequence belongs to the UppP family.

It is found in the cell inner membrane. It catalyses the reaction di-trans,octa-cis-undecaprenyl diphosphate + H2O = di-trans,octa-cis-undecaprenyl phosphate + phosphate + H(+). Catalyzes the dephosphorylation of undecaprenyl diphosphate (UPP). Confers resistance to bacitracin. In Neisseria gonorrhoeae (strain NCCP11945), this protein is Undecaprenyl-diphosphatase.